We begin with the raw amino-acid sequence, 138 residues long: MRILCLDIGSRRIGVAISDPLKIAAQPFCVLDLQKEDLYSCLDKIFNEHQIEKIVIGYPVSKFHPDKATEKLQKIDEICSELERRYKVGIIKWDERFSTKAVERILREENVSWQKRKKVVDKLAAVYILQGYLDFINS.

Belongs to the YqgF nuclease family.

The protein localises to the cytoplasm. Its function is as follows. Could be a nuclease involved in processing of the 5'-end of pre-16S rRNA. The sequence is that of Putative pre-16S rRNA nuclease from Caldicellulosiruptor saccharolyticus (strain ATCC 43494 / DSM 8903 / Tp8T 6331).